The sequence spans 367 residues: Methylated-thiol--coenzyme M methyltransferase (367 aa).

3 residues coordinate Zn(2+): His-236, Cys-238, and Cys-313.

Belongs to the uroporphyrinogen decarboxylase family. As to quaternary structure, homodimer. It depends on Zn(2+) as a cofactor.

The enzyme catalyses methanethiol + coenzyme M = methyl-coenzyme M + hydrogen sulfide + H(+). Functionally, methyltransferase involved in methanogenesis from methylated-thiols. Catalyzes two successive steps: mediates the transfer of a methyl group from the substrate to the cobalt cofactor of a methylated-thiol-specific corrinoid protein (MtsB), and the subsequent transfer of the methyl group from the corrinoid protein to coenzyme M. The polypeptide is Methylated-thiol--coenzyme M methyltransferase (mtsA) (Methanosarcina mazei (strain ATCC BAA-159 / DSM 3647 / Goe1 / Go1 / JCM 11833 / OCM 88) (Methanosarcina frisia)).